Here is an 89-residue protein sequence, read N- to C-terminus: Aminoacyl carrier protein 2 (89 aa).

The Carrier domain maps to 6–84 (INVQNRVLSV…AMERMILNQL (79 aa)). O-(pantetheine 4'-phosphoryl)serine is present on S42.

In terms of processing, 4'-phosphopantetheine is transferred from CoA to a specific serine of the apo-form of this carrier protein.

Its function is as follows. Aminoacyl carrier protein. Can be charged with L-glycine via the formation of a thioester bond between the amino acid and the 4'-phosphopantetheinyl prosthetic group, catalyzed by the bll6282 ligase. This is Aminoacyl carrier protein 2 from Bradyrhizobium diazoefficiens (strain JCM 10833 / BCRC 13528 / IAM 13628 / NBRC 14792 / USDA 110).